The following is a 1497-amino-acid chain: Polyunsaturated fatty acid synthase subunit C (1497 aa).

Dehydratase (DH) domain regions lie at residues 271–422 and 797–937; these read YKLC…DYGK and QGQY…RVRI. The span at 944 to 958 shows a compositional bias: low complexity; it reads ASSSASSVGSSASAE. Residues 944-977 form a disordered region; that stretch reads ASSSASSVGSSASAEVAERTRSKAAPQPVASGPA. The interval 1026–1470 is enoylreductase (ER) domain; that stretch reads LGDLGDRSFM…ILRGACYLRR (445 aa).

It belongs to the thioester dehydratase family. FabA subfamily. Component of the polyunsaturated fatty acid synthase complex composed of at least ORF-A, ORF-B and ORF-C.

It functions in the pathway lipid metabolism; fatty acid biosynthesis. Polyketide synthase-like protein; part of the polyunsaturated fatty acid synthase composed of the 3 PKS-like subunits A, B and C. While the saturated fatty acids (SFAs) in Thraustochytrium are produced by the conventional fatty acid synthase (FAS) pathway, polyunsaturated fatty acids (PUFAs) including docosahexeanoic acid (DHA) and docosapentaenoic acid (DPA) are synthesized via an anaerobical PKS pathway. PUFA synthase assimilates fatty acyl-CoA, the product of FAS, as the starter unit to synthesize DPA, and this starter unit may be butyryl-CoA, hexanoyl-CoA, or octanoyl-CoA. DPA and DHA biosynthesis seem to differ by the reduction at the N-3 position by PUFA synthase, not the extension of carbon chain. In DHA biosynthesis, PUFA synthase extends the fatty acyl chain from the methyl toward the carboxyl end, and the double bond is formed when the carbon chain is growing, instead of afterward. Therefore, PUFA synthase is unable to transform DPA to DHA, suggesting that DPA is not the precursor of DHA. Moreover, DPA molecule is partly extended by FAS KS domain, so DPA biosynthesis is less dependent on PUFA synthase KS domain than DHA. The sequence is that of Polyunsaturated fatty acid synthase subunit C from Thraustochytrium sp. (strain ATCC 26185 / S-3).